A 191-amino-acid chain; its full sequence is Protein LIGHT-DEPENDENT SHORT HYPOCOTYLS 9 (191 aa).

Over residues 1–14 the composition is skewed to basic and acidic residues; it reads MSSDRHTPTKDPPD. Disordered stretches follow at residues 1 to 41 and 153 to 191; these read MSSD…YESQ and QAKARGIPYRKKKRRKTKNEVVVVKKDVANSSTPNQSFT. One can recognise an ALOG domain in the interval 37–165; that stretch reads RYESQKRRDW…ARGIPYRKKK (129 aa). Residues 160–169 are compositionally biased toward basic residues; it reads PYRKKKRRKT. Positions 163-167 match the Nuclear localization signal motif; that stretch reads KKKRR. The span at 181-191 shows a compositional bias: polar residues; sequence ANSSTPNQSFT.

It belongs to the plant homeotic and developmental regulators ALOG protein family.

Its subcellular location is the nucleus. In terms of biological role, probable transcription regulator that acts as a developmental regulator by promoting cell growth in response to light. The protein is Protein LIGHT-DEPENDENT SHORT HYPOCOTYLS 9 (LSH9) of Arabidopsis thaliana (Mouse-ear cress).